The chain runs to 93 residues: YcgL domain-containing protein VIBHAR_01387 (93 aa).

A YcgL domain is found at 1 to 84; the sequence is MLCSIYKSSR…PPENLLEKYK (84 aa).

In Vibrio campbellii (strain ATCC BAA-1116), this protein is YcgL domain-containing protein VIBHAR_01387.